We begin with the raw amino-acid sequence, 437 residues long: UDP-glucuronate 4-epimerase 4 (437 aa).

A helical transmembrane segment spans residues Ser30–Leu50. A disordered region spans residues Ile56–Gly76. The chain crosses the membrane as a helical span at residues Gly96–Leu116. Thr98–Phe129 serves as a coordination point for NAD(+). Tyr248 serves as the catalytic Proton acceptor.

This sequence belongs to the NAD(P)-dependent epimerase/dehydratase family. In terms of assembly, homodimer. As to expression, in roots, leaves, siliques, flowers, pollen and stems.

It localises to the golgi apparatus. Its subcellular location is the golgi stack membrane. It catalyses the reaction UDP-alpha-D-glucuronate = UDP-alpha-D-galacturonate. Activated by glycerol, not effected by dimethyl sulfoxide and inhibited by high concentration of monovalent salts, UDP-xylose, UDP-arabinose or UDP. Involved in the synthesis of the negatively charged monosaccharide that forms the backbone of pectic cell wall components. The sequence is that of UDP-glucuronate 4-epimerase 4 (GAE4) from Arabidopsis thaliana (Mouse-ear cress).